Consider the following 148-residue polypeptide: Ubiquitin-like protein 4A (148 aa).

The Ubiquitin-like domain maps to 1–76 (MQLTVKALKG…LNLMVKDQVA (76 aa)).

In terms of assembly, component of the bag6/bat3 complex.

Its subcellular location is the cytoplasm. The protein localises to the cytosol. It localises to the nucleus. Its function is as follows. As part of a cytosolic protein quality control complex, the bag6/bat3 complex, maintains misfolded and hydrophobic patches-containing proteins in a soluble state and participates in their proper delivery to the endoplasmic reticulum or alternatively can promote their sorting to the proteasome where they undergo degradation. The bag6/bat3 complex is involved in the post-translational delivery of tail-anchored/type II transmembrane proteins to the endoplasmic reticulum membrane. Similarly, the bag6/bat3 complex also functions as a sorting platform for proteins of the secretory pathway that are mislocalized to the cytosol either delivering them to the proteasome for degradation or to the endoplasmic reticulum. The bag6/bat3 complex also plays a role in the endoplasmic reticulum-associated degradation (ERAD), a quality control mechanism that eliminates unwanted proteins of the endoplasmic reticulum through their retrotranslocation to the cytosol and their targeting to the proteasome. It maintains these retrotranslocated proteins in an unfolded yet soluble state condition in the cytosol to ensure their proper delivery to the proteasome. In Xenopus laevis (African clawed frog), this protein is Ubiquitin-like protein 4A (ubl4a).